Here is a 571-residue protein sequence, read N- to C-terminus: Proline--tRNA ligase (571 aa).

This sequence belongs to the class-II aminoacyl-tRNA synthetase family. ProS type 1 subfamily. Homodimer.

Its subcellular location is the cytoplasm. The enzyme catalyses tRNA(Pro) + L-proline + ATP = L-prolyl-tRNA(Pro) + AMP + diphosphate. Functionally, catalyzes the attachment of proline to tRNA(Pro) in a two-step reaction: proline is first activated by ATP to form Pro-AMP and then transferred to the acceptor end of tRNA(Pro). As ProRS can inadvertently accommodate and process non-cognate amino acids such as alanine and cysteine, to avoid such errors it has two additional distinct editing activities against alanine. One activity is designated as 'pretransfer' editing and involves the tRNA(Pro)-independent hydrolysis of activated Ala-AMP. The other activity is designated 'posttransfer' editing and involves deacylation of mischarged Ala-tRNA(Pro). The misacylated Cys-tRNA(Pro) is not edited by ProRS. In Ligilactobacillus salivarius (strain UCC118) (Lactobacillus salivarius), this protein is Proline--tRNA ligase.